Here is a 501-residue protein sequence, read N- to C-terminus: Glucans biosynthesis protein G (501 aa).

An N-terminal signal peptide occupies residues 1–24 (MNRRQVLAALAAIPLLPEAFPANA).

It belongs to the OpgD/OpgG family.

Its subcellular location is the periplasm. It functions in the pathway glycan metabolism; osmoregulated periplasmic glucan (OPG) biosynthesis. Functionally, involved in the biosynthesis of osmoregulated periplasmic glucans (OPGs). The protein is Glucans biosynthesis protein G of Rhodopseudomonas palustris (strain BisA53).